The sequence spans 298 residues: Inosose dehydratase (298 aa).

This sequence belongs to the IolE/MocC family. It depends on glutathione as a cofactor. Co(2+) serves as cofactor. Requires Mn(2+) as cofactor.

It catalyses the reaction scyllo-inosose = 3D-3,5/4-trihydroxycyclohexane-1,2-dione + H2O. The protein operates within polyol metabolism; myo-inositol degradation into acetyl-CoA; acetyl-CoA from myo-inositol: step 2/7. Functionally, catalyzes the dehydration of inosose (2-keto-myo-inositol, 2KMI or 2,4,6/3,5-pentahydroxycyclohexanone) to 3D-(3,5/4)-trihydroxycyclohexane-1,2-dione (D-2,3-diketo-4-deoxy-epi-inositol). The chain is Inosose dehydratase from Lacticaseibacillus casei (Lactobacillus casei).